Consider the following 351-residue polypeptide: Cytosolic sulfotransferase 11 (351 aa).

Residue 98-103 participates in 3'-phosphoadenylyl sulfate binding; that stretch reads KGGTTW. The active-site Proton acceptor is histidine 163. 3'-phosphoadenylyl sulfate-binding positions include arginine 184, serine 192, tyrosine 250, and 316–318; that span reads RKG.

The protein belongs to the sulfotransferase 1 family.

It localises to the cytoplasm. In terms of biological role, sulfotransferase that utilizes 3'-phospho-5'-adenylyl sulfate (PAPS) as sulfonate donor. The chain is Cytosolic sulfotransferase 11 (SOT11) from Arabidopsis thaliana (Mouse-ear cress).